Consider the following 156-residue polypeptide: Small ribosomal subunit protein uS7 (156 aa).

This sequence belongs to the universal ribosomal protein uS7 family. In terms of assembly, part of the 30S ribosomal subunit. Contacts proteins S9 and S11.

Its function is as follows. One of the primary rRNA binding proteins, it binds directly to 16S rRNA where it nucleates assembly of the head domain of the 30S subunit. Is located at the subunit interface close to the decoding center, probably blocks exit of the E-site tRNA. The sequence is that of Small ribosomal subunit protein uS7 from Rhodopseudomonas palustris (strain BisB5).